We begin with the raw amino-acid sequence, 88 residues long: Small ribosomal subunit protein bS20 (88 aa).

Residues 1 to 25 (MANTPSAKKAARKIERRTAVNRARR) are disordered.

This sequence belongs to the bacterial ribosomal protein bS20 family.

Binds directly to 16S ribosomal RNA. This chain is Small ribosomal subunit protein bS20, found in Azorhizobium caulinodans (strain ATCC 43989 / DSM 5975 / JCM 20966 / LMG 6465 / NBRC 14845 / NCIMB 13405 / ORS 571).